The sequence spans 444 residues: Tol-Pal system protein TolB (444 aa).

Residues 1 to 18 (MRNIIYFILLLFSCTGYA) form the signal peptide.

This sequence belongs to the TolB family. As to quaternary structure, the Tol-Pal system is composed of five core proteins: the inner membrane proteins TolA, TolQ and TolR, the periplasmic protein TolB and the outer membrane protein Pal. They form a network linking the inner and outer membranes and the peptidoglycan layer.

The protein localises to the periplasm. In terms of biological role, part of the Tol-Pal system, which plays a role in outer membrane invagination during cell division and is important for maintaining outer membrane integrity. The protein is Tol-Pal system protein TolB of Rickettsia canadensis (strain McKiel).